Reading from the N-terminus, the 231-residue chain is Octanoyltransferase (231 aa).

Residues 49–224 (ADTPDEIWLL…ALQRLLPPVY (176 aa)) form the BPL/LPL catalytic domain. Substrate-binding positions include 88-95 (RGGQITYH), 155-157 (ALG), and 168-170 (GLA). C186 serves as the catalytic Acyl-thioester intermediate.

The protein belongs to the LipB family.

It localises to the cytoplasm. The catalysed reaction is octanoyl-[ACP] + L-lysyl-[protein] = N(6)-octanoyl-L-lysyl-[protein] + holo-[ACP] + H(+). The protein operates within protein modification; protein lipoylation via endogenous pathway; protein N(6)-(lipoyl)lysine from octanoyl-[acyl-carrier-protein]: step 1/2. Functionally, catalyzes the transfer of endogenously produced octanoic acid from octanoyl-acyl-carrier-protein onto the lipoyl domains of lipoate-dependent enzymes. Lipoyl-ACP can also act as a substrate although octanoyl-ACP is likely to be the physiological substrate. This Aromatoleum aromaticum (strain DSM 19018 / LMG 30748 / EbN1) (Azoarcus sp. (strain EbN1)) protein is Octanoyltransferase.